Consider the following 242-residue polypeptide: Sugar fermentation stimulation protein homolog (242 aa).

This sequence belongs to the SfsA family.

This Methanosphaera stadtmanae (strain ATCC 43021 / DSM 3091 / JCM 11832 / MCB-3) protein is Sugar fermentation stimulation protein homolog.